Reading from the N-terminus, the 86-residue chain is Superoxide dismutase [Cu-Zn] (86 aa).

The disordered stretch occupies residues 1–26 (AKEKGGKLTAGLAAGGHWNPNKAPHH). Residues 7-16 (KLTAGLAAGG) show a composition bias toward low complexity. His-17 contacts Cu cation. Residues His-17, His-26, His-35, and Asp-38 each contribute to the Zn(2+) site. His-73 is a Cu cation binding site.

The protein belongs to the Cu-Zn superoxide dismutase family. Homodimer. Cu cation is required as a cofactor. It depends on Zn(2+) as a cofactor.

Its subcellular location is the periplasm. It catalyses the reaction 2 superoxide + 2 H(+) = H2O2 + O2. Its function is as follows. Destroys radicals which are normally produced within the cells and which are toxic to biological systems. This chain is Superoxide dismutase [Cu-Zn] (sodC), found in Mannheimia haemolytica (Pasteurella haemolytica).